An 880-amino-acid polypeptide reads, in one-letter code: GRB2-associated and regulator of MAPK protein 2 (880 aa).

A CABIT region spans residues 12-320; that stretch reads RWSMGAFPLD…HFLLLTDTPR (309 aa). Disordered stretches follow at residues 385-407, 461-483, 527-548, 569-611, and 633-713; these read PGAV…PGDS, IVGP…SEAV, SSLS…GSGS, SESS…ADTP, and APFG…ELGQ. 2 stretches are compositionally biased toward low complexity: residues 640–663 and 683–696; these read PFSG…STSG and QGYS…LSSS. At serine 740 the chain carries Phosphoserine. The SAM domain maps to 813 to 877; it reads SALSLEEVSR…KIMQFIKGWR (65 aa).

This sequence belongs to the GAREM family.

Its function is as follows. Probable adapter protein that provides a critical link between cell surface epidermal growth factor receptor and the MAPK/ERK signaling pathway. This Mus musculus (Mouse) protein is GRB2-associated and regulator of MAPK protein 2 (Garem2).